Consider the following 652-residue polypeptide: MSSPINDYFIDYNPLFPIFATRIAKGLAIYRVSDHARLAVIPIRNINLVANYDWDTTTGKFLSIFFKDGTIRIHDIFKDGRLVSFLRIPSTKISKGIWDRIPLRYEPNNRDFACNIIDDLPKLIRFVKDSKRINIVPYTQPNSLWRGPDEDDLDSNEKLDVHVVFNEGNDKITVFFNGDYAVFLSVDNIENENSLKSIIKVQDGFYQCFYEDGTVQTLNLGPLLQSKSSVNLLNYIMVIKELIGYMLTHLEFINRELATPYLDFVKRLCDEAYGYGKLKSELEALFLLGEISCDLEDWLCNSVGEKNFKRWKYLGCEAYQKTVQILTLIFVPACERIIIYVEKLRAILQAFSIQNKLSYTSDLTAVEVLLKSSQKLLTMTLNSIIGLGRDETLFEKFFIWFNDRLHEALDEDYKLKFQFEDDLYFGYDLLSYFDRILSKKGTEPSSIIDVKLYRDLINSMSDMEKDIAQSNVNSHIQQHILVDLKTDVFAQKYPSSQINLLDAIKLPKHNYIVYLIQVTKHNSAQEPFSEENKKKLYIGTLKDENLGIISKESSVKIPALFKSYRLSSTRFVPNRVHSLLRDIGLSDSNYHSSHVTDYRGENYENEEDDGTIAIPAYIRENRENDDFIACTAKVSVDGRSASLVFPKEKQNV.

As to quaternary structure, the APC/C is composed of at least 13 subunits that stay tightly associated throughout the cell cycle: APC1, APC2, APC4, APC5, APC9, APC11, CDC16, CDC23, CDC26, CDC27, DOC1, MND2 and SWM1.

It is found in the cytoplasm. Its subcellular location is the nucleus. It participates in protein modification; protein ubiquitination. Component of the anaphase promoting complex/cyclosome (APC/C), a cell cycle-regulated E3 ubiquitin-protein ligase complex that controls progression through mitosis and the G1 phase of the cell cycle. The APC/C is thought to confer substrate specificity and, in the presence of ubiquitin-conjugating E2 enzymes, it catalyzes the formation of protein-ubiquitin conjugates that are subsequently degraded by the 26S proteasome. In early mitosis, the APC/C is activated by CDC20 and targets securin PDS1, the B-type cyclin CLB5, and other anaphase inhibitory proteins for proteolysis, thereby triggering the separation of sister chromatids at the metaphase-to-anaphase transition. In late mitosis and in G1, degradation of CLB5 allows activation of the APC/C by CDH1, which is needed to destroy CDC20 and the B-type cyclin CLB2 to allow exit from mitosis and creating the low CDK state necessary for cytokinesis and for reforming prereplicative complexes in G1 prior to another round of replication. The chain is Anaphase-promoting complex subunit 4 (APC4) from Saccharomyces cerevisiae (strain ATCC 204508 / S288c) (Baker's yeast).